Reading from the N-terminus, the 203-residue chain is Thymidylate kinase (203 aa).

Position 14 to 21 (14 to 21) interacts with ATP; that stretch reads GMDGIGKS.

It belongs to the thymidylate kinase family.

It carries out the reaction dTMP + ATP = dTDP + ADP. Phosphorylation of dTMP to form dTDP in both de novo and salvage pathways of dTTP synthesis. The sequence is that of Thymidylate kinase from Rickettsia typhi (strain ATCC VR-144 / Wilmington).